Consider the following 861-residue polypeptide: Integrator complex subunit 6-like (861 aa).

The region spanning 3–227 (ILLFLIDTSA…QCLESLVQKV (225 aa)) is the VWFA domain. Residues 605–626 (PQNKVKRPGEPNSPMSSKRRRS) form a disordered region. Phosphoserine is present on Ser-617.

This chain is Integrator complex subunit 6-like (INTS6L), found in Homo sapiens (Human).